Consider the following 102-residue polypeptide: Monothiol glutaredoxin-S5 (102 aa).

Positions 1–101 (MENLQKMISE…PMLKRAGALW (101 aa)) constitute a Glutaredoxin domain. Residue cysteine 21 coordinates [2Fe-2S] cluster. Positions 99–102 (ALWL) match the Responsive for interaction with TGA factors motif.

The protein belongs to the glutaredoxin family. CC-type subfamily.

The protein resides in the cytoplasm. The protein localises to the nucleus. May only reduce GSH-thiol disulfides, but not protein disulfides. This Arabidopsis thaliana (Mouse-ear cress) protein is Monothiol glutaredoxin-S5 (GRXS5).